The following is a 227-amino-acid chain: 7-cyano-7-deazaguanine synthase (227 aa).

An ATP-binding site is contributed by 9–19 (LSGGLDSATVL). Residues Cys-189, Cys-199, Cys-202, and Cys-205 each contribute to the Zn(2+) site.

Belongs to the QueC family. Zn(2+) serves as cofactor.

The enzyme catalyses 7-carboxy-7-deazaguanine + NH4(+) + ATP = 7-cyano-7-deazaguanine + ADP + phosphate + H2O + H(+). The protein operates within purine metabolism; 7-cyano-7-deazaguanine biosynthesis. Functionally, catalyzes the ATP-dependent conversion of 7-carboxy-7-deazaguanine (CDG) to 7-cyano-7-deazaguanine (preQ(0)). The sequence is that of 7-cyano-7-deazaguanine synthase from Cupriavidus metallidurans (strain ATCC 43123 / DSM 2839 / NBRC 102507 / CH34) (Ralstonia metallidurans).